The sequence spans 424 residues: Myb family transcription factor RLI1 (424 aa).

The disordered stretch occupies residues 144 to 165 (RPQKRDSGERTPLPPPSQQQHQ). Positions 238–298 (APSKTRIRWT…HLQKYRIAKY (61 aa)) constitute an HTH myb-type domain. Positions 269 to 294 (PKGILKLMNSDGLTIYHIKSHLQKYR) form a DNA-binding region, H-T-H motif. Residues 326-391 (MQITEALRVQ…ELDDVVAFAA (66 aa)) adopt a coiled-coil conformation. The LHEQLE signature appears at 342–347 (LHEQLE).

The protein belongs to the MYB-CC family. In terms of assembly, interacts with SPX1 and SPX2 in the nucleus; these interactions prevent binding to the promoters of target genes, thus regulating negatively leaf inclination in response to phosphate (Pi) starvation. Homodimer. Interacts with PHR2 in the nucleus. Mostly expressed in roots and leaves blades and, to a lower extent, in leaves sheaths, culms and panicles. Localized in leaves lamina joints. In terms of tissue distribution, expressed equally in shoots and roots. As to expression, mostly expressed in shoots and, to a lower extent, in roots.

It localises to the nucleus. Its function is as follows. Transcription factor binding to specific DNA sequences of target genes promoters, such as the motif R1BS 5'-NAKATNCN-3' and the motif P1BS 5'-GNATATNC-3' to trigger their expression. Nitrate-induced component involved in modulating phosphate (Pi) response and homeostasis together with PHR2; activates directly the expression of Pi starvation-induced (PSI) genes upon nitrate disponibility, thus triggering the nitrate-induced phosphate response (NIPR) promoting Pi uptake activity. In terms of biological role, binds preferentially to the P1BS motif 5'-GNATATNC-3' in target genes promoters. Binds preferentially to the R1BS motif 5'-NAKATNCN-3' in target genes promoters, including several genes involved in the plant hormone signal transduction pathway. Involved in the shoot architecture; positively regulates leaf inclination by affecting lamina joint cell elongation via the direct promotion of ILI4/BU1 and BC1 genes expression, especially in response to phosphate (Pi) availability. Regulates both brassinolide (BL) biosynthesis and signaling by directly activating BL-biosynthesis and signaling genes. In Oryza sativa subsp. japonica (Rice), this protein is Myb family transcription factor RLI1.